The sequence spans 811 residues: Receptor-like protein 52 (811 aa).

A signal peptide spans 1–22 (MTFLPLLFIFFFLTSIPFPAFS). Topologically, residues 23–770 (QYNDRSTLLN…EDEEEVMNWT (748 aa)) are extracellular. N-linked (GlcNAc...) asparagine glycans are attached at residues asparagine 47, asparagine 64, asparagine 74, asparagine 93, asparagine 109, and asparagine 124. 6 LRR repeats span residues 62–86 (AGNV…ICNF), 87–110 (PNLK…LYNC), 112–134 (KLQY…INRL), 135–159 (APKL…IGRI), 161–183 (KLKV…IGDL), and 184–208 (SELE…EFGK). The LRR 7; degenerate repeat unit spans residues 211 to 233 (KLKYMWLEEMNLIGEISAVVFEN). Residues asparagine 233, asparagine 246, asparagine 260, asparagine 295, and asparagine 304 are each glycosylated (N-linked (GlcNAc...) asparagine). LRR repeat units lie at residues 234–258 (MTDL…LFGL), 260–281 (NLTE…SISA), 282–305 (KNLV…IGNL), 307–329 (NLEL…IGKL), 330–354 (PELK…GFIS), 356–377 (LERF…LCHG), 379–401 (KLQS…LGDC), and 403–427 (TLSS…TRSN). N-linked (GlcNAc...) asparagine glycosylation is found at asparagine 389, asparagine 422, asparagine 429, asparagine 455, asparagine 464, and asparagine 485. 10 LRR repeats span residues 441-465 (LHSL…IANL), 466-489 (STLE…ISTS), 491-511 (KSID…LVRI), 512-537 (SSLE…SMQQ), 539-557 (QVLV…QNGF), 558-581 (SKLR…FFVN), 625-649 (LNTF…VGLL), 650-673 (KELH…MGNL), 674-697 (IELE…LGKL), and 699-722 (YLAY…QFQT). Asparagine 525 carries N-linked (GlcNAc...) asparagine glycosylation. Asparagine 571 and asparagine 581 each carry an N-linked (GlcNAc...) asparagine glycan. The N-linked (GlcNAc...) asparagine glycan is linked to asparagine 656. N-linked (GlcNAc...) asparagine glycosylation occurs at asparagine 704. The helical transmembrane segment at 771-791 (AAAIGSIPGISIGLTMGYILV) threads the bilayer. At 792–811 (SYKPEWLMNSGRNKRRIKPI) the chain is on the cytoplasmic side.

Belongs to the RLP family.

It is found in the cell membrane. Its function is as follows. Required for defense against powdery mildew pathogen. This Arabidopsis thaliana (Mouse-ear cress) protein is Receptor-like protein 52.